We begin with the raw amino-acid sequence, 131 residues long: Tegument protein ORF52 (131 aa).

Residues 103-131 form a disordered region; that stretch reads SDGGTAKPPPGANNRRRRGASTTRAGVDD. The span at 122-131 shows a compositional bias: low complexity; it reads ASTTRAGVDD. At serine 123 the chain carries Phosphoserine; by host.

The protein belongs to the herpesviridae BLRF2 family. Homooligomer; homooligomerizes and binds double-stranded DNA (dsDNA) cooperatively. Interacts with host CGAS. Interacts with PQBP1.

Its subcellular location is the host cytoplasm. The protein localises to the virion tegument. Plays a role in the inhibition of host innate immune system by targeting the CGAS enzymatic activity which is the principal cytosolic DNA sensor that detects invading viral DNA. Acts by inhibiting CGAS-DNA phase separation: directly binds double-stranded DNA (dsDNA) in a length dependent but sequence independent manner and is able to form DNA-induced phase separation in infected cells. DNA phase separation of ORF52 mediates disruption of liquid-like droplets in which CGAS is activated, thereby preventing CGAS activity. Targets also the HDP-RNP complex composed of DNA-PK subunits and paraspeckle proteins. This complex is a key nuclear regulator of DNA-mediated activation of innate immune response through the cGAS-STING pathway. This chain is Tegument protein ORF52, found in Homo sapiens (Human).